Here is an 84-residue protein sequence, read N- to C-terminus: M-zodatoxin-Lt2a (84 aa).

The first 22 residues, 1–22 (MKYFVIALALAVALVCIAESTA), serve as a signal peptide directing secretion. Positions 23–58 (YEVNEELENELDDLDDAAWLAVAEELQGLEDFEESR) are excised as a propeptide. The Processing quadruplet motif signature appears at 55–58 (EESR).

In terms of processing, cleavage of the propeptide depends on the processing quadruplet motif (XXXR, with at least one of X being E). Expressed by the venom gland.

The protein resides in the secreted. It has antimicrobial activity against Gram-positive bacteria (A.globiformis VKM Ac-1112 (MIC=0.7 uM), and B.subtilis VKM B-501 (MIC=0.4 uM)), Gram-negative bacteria (E.coli DH5-alpha (MIC=1.0 uM), E.coli MH1 (MIC=0.7 uM), and P.aeruginosa PAO1 (MIC=6.7 uM)), and yeasts (P.pastoris GS115 (MIC=6.7 uM), and S.cerevisiae Y190 (MIC=54 uM)). Also has a strong hemolytic activity against rabbit erythrocytes. Causes paralysis, but is not lethal when injected into insect (M.domestica) larvae. The sequence is that of M-zodatoxin-Lt2a from Lachesana tarabaevi (Spider).